Reading from the N-terminus, the 269-residue chain is [LysW]-aminoadipate kinase (269 aa).

5-8 (KVGG) lines the ATP pocket. A substrate-binding site is contributed by Arg-64. Position 78 (Tyr-78) interacts with ATP. Substrate is bound at residue Asn-168.

Belongs to the acetylglutamate kinase family. LysZ subfamily.

The protein localises to the cytoplasm. The enzyme catalyses [amino-group carrier protein]-C-terminal-N-(1,4-dicarboxybutan-1-yl)-L-glutamine + ATP = [amino-group carrier protein]-C-terminal-N-(1-carboxy-5-phosphooxy-5-oxopentan-1-yl)-L-glutamine + ADP. It participates in amino-acid biosynthesis; L-lysine biosynthesis via AAA pathway; L-lysine from L-alpha-aminoadipate (Thermus route): step 2/5. In terms of biological role, catalyzes the phosphorylation of LysW-gamma-alpha-aminoadipate. Does not phosphorylate N-acetyl-glutamate. This is [LysW]-aminoadipate kinase from Thermus thermophilus (strain ATCC BAA-163 / DSM 7039 / HB27).